The chain runs to 380 residues: ATPase ASNA1 homolog (380 aa).

Residue 48–55 (KGGVGKTT) participates in ATP binding. The active site involves Asp77. Positions 248 and 275 each coordinate ATP.

Belongs to the arsA ATPase family. Homodimer.

The protein resides in the cytoplasm. It localises to the endoplasmic reticulum. Its function is as follows. ATPase required for the post-translational delivery of tail-anchored (TA) proteins to the endoplasmic reticulum. Recognizes and selectively binds the transmembrane domain of TA proteins in the cytosol. This complex then targets to the endoplasmic reticulum by membrane-bound receptors, where the tail-anchored protein is released for insertion. This process is regulated by ATP binding and hydrolysis. ATP binding drives the homodimer towards the closed dimer state, facilitating recognition of newly synthesized TA membrane proteins. ATP hydrolysis is required for insertion. Subsequently, the homodimer reverts towards the open dimer state, lowering its affinity for the membrane-bound receptor, and returning it to the cytosol to initiate a new round of targeting. The protein is ATPase ASNA1 homolog of Plasmodium chabaudi chabaudi.